Consider the following 359-residue polypeptide: MRLPLLSFVIFALFALVFASGVVELQSLNELENTIRASKKGALIEFYATWCGHCKSLAPVYEELGALFEDHNDVLIGKIDADTHSDVADKYHITGFPTLIWFPPDGSEPVQYSNARDVDSLTQFVSEKTGIKKRKIVLPSNVVELDSLNFDKVVMDDKKDVLVEFYADWCGYCKRLAPTYETLGKVFKNEPNVEIVKINADVFADIGRLHEVASFPTIKFFPKDDKDKPELYEGDRSLESLIEYINKKSGTQRSPDGTLLSTAGRIPTFDEFAAEFLDMSNAAKEVVLEKVKQLALEDSSRWTKYYKKVFEKILNDENWVHKEAKRLSKLLRQKSIALASADDFKTRLNILNSFLPGNH.

A signal peptide spans 1–19 (MRLPLLSFVIFALFALVFA). Thioredoxin domains follow at residues 20 to 130 (SGVV…EKTG) and 134 to 250 (RKIV…KKSG). Active-site nucleophile residues include cysteine 51 and cysteine 54. Intrachain disulfides connect cysteine 51/cysteine 54 and cysteine 170/cysteine 173.

Belongs to the protein disulfide isomerase family.

It carries out the reaction Catalyzes the rearrangement of -S-S- bonds in proteins.. Functionally, participates in the folding of proteins containing disulfide bonds, may be involved in glycosylation, prolyl hydroxylation and triglyceride transfer. This Schizosaccharomyces pombe (strain 972 / ATCC 24843) (Fission yeast) protein is Protein disulfide-isomerase C17H9.14c.